Consider the following 128-residue polypeptide: Sulfurtransferase TusD (128 aa).

Cysteine 78 serves as the catalytic Cysteine persulfide intermediate.

The protein belongs to the DsrE/TusD family. In terms of assembly, heterohexamer, formed by a dimer of trimers. The hexameric TusBCD complex contains 2 copies each of TusB, TusC and TusD. The TusBCD complex interacts with TusE.

The protein resides in the cytoplasm. Functionally, part of a sulfur-relay system required for 2-thiolation of 5-methylaminomethyl-2-thiouridine (mnm(5)s(2)U) at tRNA wobble positions. Accepts sulfur from TusA and transfers it in turn to TusE. The protein is Sulfurtransferase TusD of Salmonella agona (strain SL483).